Here is a 613-residue protein sequence, read N- to C-terminus: Zinc metalloproteinase-disintegrin-like EoVMP2 (613 aa).

Positions 1–20 (MMQVLLVTICLAVFPYQGSS) are cleaved as a signal peptide. Positions 21-194 (IILESGNVND…EASQLFATSE (174 aa)) are excised as a propeptide. Gln195 is subject to Pyrrolidone carboxylic acid. Residues 201-397 (RYIEFFIVVD…RNPKCMINKP (197 aa)) enclose the Peptidase M12B domain. Glu204 lines the Ca(2+) pocket. Asn219 carries N-linked (GlcNAc...) asparagine glycosylation. Position 288 (Asp288) interacts with Ca(2+). 3 cysteine pairs are disulfide-bonded: Cys312–Cys392, Cys352–Cys376, and Cys354–Cys359. His337 is a binding site for Zn(2+). Residue Glu338 is part of the active site. Positions 341 and 347 each coordinate Zn(2+). An N-linked (GlcNAc...) asparagine glycan is attached at Asn375. 8 residues coordinate Ca(2+): Cys392, Asn395, Val407, Asn410, Leu412, Glu414, Glu417, and Asp420. The region spanning 405 to 491 (PPVCGNGLLE…DCPIDGFHAN (87 aa)) is the Disintegrin domain. 14 cysteine pairs are disulfide-bonded: Cys408–Cys437, Cys419–Cys432, Cys421–Cys427, Cys431–Cys454, Cys445–Cys451, Cys450–Cys476, Cys463–Cys483, Cys470–Cys502, Cys495–Cys507, Cys514–Cys564, Cys529–Cys575, Cys542–Cys552, Cys559–Cys601, and Cys595–Cys606. The short motif at 469–471 (DCD) is the D/ECD-tripeptide element.

Belongs to the venom metalloproteinase (M12B) family. P-III subfamily. P-IIIa sub-subfamily. Monomer. Zn(2+) serves as cofactor. In terms of tissue distribution, expressed by the venom gland.

It localises to the secreted. In terms of biological role, snake venom zinc metalloprotease that possesses high hemorrhagic activity. It inhibits collagen-induced platelet aggregation and activates prothrombin (F2). This is Zinc metalloproteinase-disintegrin-like EoVMP2 (Svmp3-Eoc22) from Echis ocellatus (Ocellated saw-scaled viper).